The chain runs to 651 residues: E3 SUMO-protein ligase PIAS1 (651 aa).

The residue at position 2 (A2) is an N-acetylalanine. The required for interaction with MSX1 stretch occupies residues 2 to 200 (ADSAELKQMV…KCDFTVQVQL (199 aa)). The region spanning 11–45 (VMSLRVSELQVLLGYAGRNKHGRKHELLTKALHLL) is the SAP domain. An LXXLL motif motif is present at residues 19-23 (LQVLL). Residues K40 and K46 each participate in a glycyl lysine isopeptide (Lys-Gly) (interchain with G-Cter in SUMO2) cross-link. Positions 56–64 (KIKELYRRR) match the Nuclear localization signal motif. In terms of domain architecture, PINIT spans 124–288 (HLTSALHPVH…SMAVYLVKQL (165 aa)). Residues K137 and K238 each participate in a glycyl lysine isopeptide (Lys-Gly) (interchain with G-Cter in SUMO2) cross-link. The SP-RING-type zinc finger occupies 320-405 (PDSEIATTSL…LKYCTDCDEI (86 aa)). Zn(2+) contacts are provided by C351, H353, C374, and C377. A Nuclear localization signal motif is present at residues 368–380 (KKPTWVCPVCDKK). Residue K453 forms a Glycyl lysine isopeptide (Lys-Gly) (interchain with G-Cter in SUMO2) linkage. The SUMO1-binding stretch occupies residues 462-473 (LTIDSSSDEEEE). The interval 465–511 (DSSSDEEEEEPPAKRTCPSLSPTSPLSNKGILSLPHQASPVSRTPSL) is disordered. Phosphoserine occurs at positions 467, 468, 483, and 485. Positions 482 to 491 (PSLSPTSPLS) are enriched in low complexity. T487 carries the post-translational modification Phosphothreonine. 2 positions are modified to phosphoserine: S488 and S491. Residue K493 forms a Glycyl lysine isopeptide (Lys-Gly) (interchain with G-Cter in SUMO2) linkage. Residues S503, S510, and S522 each carry the phosphoserine modification. 2 repeat units span residues 520 to 523 (NTSL) and 557 to 560 (NTSL). The interval 520–615 (NTSLIQDYRH…GSSSGSNSSL (96 aa)) is 4 X 4 AA repeats of N-T-S-L. The stretch at 598–601 (STSL) is one 3; approximate repeat. The interval 600-630 (SLPATNGSSSGSNSSLVSSNSLRESHGHGVA) is disordered. Low complexity predominate over residues 605 to 621 (NGSSSGSNSSLVSSNSL). One copy of the 4; approximate repeat lies at 612–615 (NSSL).

The protein belongs to the PIAS family. Interacts with NR2C1; the interaction promotes its sumoylation. Interacts with DDX21, CSRP2, AXIN1, JUN, SATB2, PLAG1, TP53 and STAT1 (dimer), following IFNA1-stimulation. Interacts with SP3 (preferentially when SUMO-modified). Interacts with KLF8; the interaction results in SUMO ligation and repression of KLF8 transcriptional activity and of its cell cycle progression into G(1) phase. Interacts with CHUK/IKKA; this interaction induces PIAS1 phosphorylation. Interacts with PTK2/FAK1; the interaction promotes its sumoylation. Interacts with SUMO1, UBE2I, NCOA2 and AR. Interacts with NR2C1; the interaction promotes its sumoylation. Interacts with DDX5. Interacts with MTA1. Interacts with PML (isoform PML-12). Interacts with PRDM1. Interacts (via N-terminus) with MSX1 (via C-terminus); the interaction is required for the localization of both proteins to the nuclear periphery and specific binding of MSX1 to the core enhancer region in target gene promoters. In terms of processing, sumoylated. Expressed in kidney, heart, spleen, brain and cerebellum; weak expression, if any, in liver and lung.

The protein localises to the nucleus. The protein resides in the nucleus speckle. It is found in the PML body. Its subcellular location is the cytoplasm. It localises to the cytoskeleton. The catalysed reaction is S-ubiquitinyl-[E2 ubiquitin-conjugating enzyme]-L-cysteine + [acceptor protein]-L-lysine = [E2 ubiquitin-conjugating enzyme]-L-cysteine + N(6)-ubiquitinyl-[acceptor protein]-L-lysine.. Its pathway is protein modification; protein sumoylation. Its function is as follows. Functions as an E3-type small ubiquitin-like modifier (SUMO) ligase, stabilizing the interaction between UBE2I and the substrate, and as a SUMO-tethering factor. Catalyzes sumoylation of various proteins, such as CEBPB, MRE11, MTA1, PTK2 and PML. Plays a crucial role as a transcriptional coregulation in various cellular pathways, including the STAT pathway, the p53 pathway and the steroid hormone signaling pathway. In vitro, binds A/T-rich DNA. The effects of this transcriptional coregulation, transactivation or silencing, may vary depending upon the biological context. Mediates sumoylation of MRE11, stabilizing MRE11 on chromatin during end resection. Sumoylates PML (at 'Lys-65' and 'Lys-160') and PML-RAR and promotes their ubiquitin-mediated degradation. PIAS1-mediated sumoylation of PML promotes its interaction with CSNK2A1/CK2 which in turn promotes PML phosphorylation and degradation. Enhances the sumoylation of MTA1 and may participate in its paralog-selective sumoylation. Plays a dynamic role in adipogenesis by promoting the SUMOylation and degradation of CEBPB. Mediates the nuclear mobility and localization of MSX1 to the nuclear periphery, whereby MSX1 is brought into the proximity of target myoblast differentiation factor genes. Also required for the binding of MSX1 to the core enhancer region in target gene promoter regions, independent of its sumoylation activity. Capable of binding to the core enhancer region TAAT box in the MYOD1 gene promoter. The chain is E3 SUMO-protein ligase PIAS1 (Pias1) from Mus musculus (Mouse).